Reading from the N-terminus, the 233-residue chain is MGSPRSALSCLLLHLLVLCLQAQEGPGRGPALGRELASLFRAGREPQGVSQQHVREQSLVTDQLSRRLIRTYQLYSRTSGKHVQVLANKRINAMAEDGDPFAKLIVETDTFGSRVRVRGAETGLYICMNKKGKLIAKSNGKGKDCVFTEIVLENNYTALQNAKYEGWYMAFTRKGRPRKGSKTRQHQREVHFMKRLPRGHHTTEQSLRFEFLNYPPFTRSLRGSQRTWAPEPR.

The first 22 residues, 1–22, serve as a signal peptide directing secretion; it reads MGSPRSALSCLLLHLLVLCLQA. N-linked (GlcNAc...) asparagine glycosylation is present at asparagine 155.

Belongs to the heparin-binding growth factors family. Monomer. Homodimer. Interacts with FGFR1, FGFR2, FGFR3 and FGFR4. Affinity between fibroblast growth factors (FGFs) and their receptors is increased by heparan sulfate glycosaminoglycans that function as coreceptors.

It is found in the secreted. Its function is as follows. Plays an important role in the regulation of embryonic development, cell proliferation, cell differentiation and cell migration. Required for normal brain, eye, ear and limb development during embryogenesis. Required for normal development of the gonadotropin-releasing hormone (GnRH) neuronal system. Plays a role in neurite outgrowth in hippocampal cells. In Homo sapiens (Human), this protein is Fibroblast growth factor 8 (FGF8).